We begin with the raw amino-acid sequence, 614 residues long: Acetylcholinesterase (614 aa).

Residues 1-31 (MRPPQCLLHTPSLASPLLLLLLWLLGGGVGA) form the signal peptide. A disulfide bridge links Cys-100 with Cys-127. Trp-117 lines the galanthamine pocket. Trp-117 contributes to the huperzine A binding site. Gly-153 contacts huprine W. Residue Tyr-164 participates in huperzine A binding. 233–234 (ES) provides a ligand contact to galanthamine. Ser-234 contacts huprine W. The Acyl-ester intermediate role is filled by Ser-234. Cys-288 and Cys-303 are oxidised to a cystine. Residue Asn-296 is glycosylated (N-linked (GlcNAc...) asparagine). Residue Glu-365 is the Charge relay system of the active site. Tyr-368 contacts galanthamine. Huperzine A is bound at residue Tyr-368. An N-linked (GlcNAc...) asparagine glycan is attached at Asn-381. Residues Cys-440 and Cys-560 are joined by a disulfide bond. Residues Trp-470 and His-478 each coordinate huprine W. The Charge relay system role is filled by His-478. A glycan (N-linked (GlcNAc...) asparagine) is linked at Asn-495. Phe-588 is lipidated: GPI-anchor amidated glycine.

This sequence belongs to the type-B carboxylesterase/lipase family. Interacts with PRIMA1. The interaction with PRIMA1 is required to anchor it to the basal lamina of cells and organize into tetramers. Isoform H generates GPI-anchored dimers; disulfide linked. Isoform T generates multiple structures, ranging from monomers and dimers to collagen-tailed and hydrophobic-tailed forms, in which catalytic tetramers are associated with anchoring proteins that attach them to the basal lamina or to cell membranes. In the collagen-tailed forms, isoform T subunits are associated with a specific collagen, COLQ, which triggers the formation of isoform T tetramers, from monomers and dimers. Isoform R may be monomeric. Isoform H is highly expressed in erythrocytes.

The protein localises to the synapse. It is found in the secreted. Its subcellular location is the cell membrane. The protein resides in the nucleus. It catalyses the reaction acetylcholine + H2O = choline + acetate + H(+). Functionally, hydrolyzes rapidly the acetylcholine neurotransmitter released into the synaptic cleft allowing to terminate the signal transduction at the neuromuscular junction. Role in neuronal apoptosis. The polypeptide is Acetylcholinesterase (Homo sapiens (Human)).